Consider the following 190-residue polypeptide: Xanthine phosphoribosyltransferase 1 (190 aa).

Positions 20 and 27 each coordinate xanthine. 5-phospho-alpha-D-ribose 1-diphosphate is bound at residue 128–132; the sequence is ANGEA. K156 is a binding site for xanthine.

This sequence belongs to the purine/pyrimidine phosphoribosyltransferase family. Xpt subfamily. In terms of assembly, homodimer.

The protein resides in the cytoplasm. The catalysed reaction is XMP + diphosphate = xanthine + 5-phospho-alpha-D-ribose 1-diphosphate. It functions in the pathway purine metabolism; XMP biosynthesis via salvage pathway; XMP from xanthine: step 1/1. In terms of biological role, converts the preformed base xanthine, a product of nucleic acid breakdown, to xanthosine 5'-monophosphate (XMP), so it can be reused for RNA or DNA synthesis. The chain is Xanthine phosphoribosyltransferase 1 from Clostridium botulinum (strain ATCC 19397 / Type A).